We begin with the raw amino-acid sequence, 34 residues long: Beta-theraphotoxin-Pmu1a (34 aa).

3 cysteine pairs are disulfide-bonded: cysteine 3–cysteine 18, cysteine 10–cysteine 23, and cysteine 17–cysteine 30. Leucine 34 carries the leucine amide modification.

This sequence belongs to the neurotoxin 10 (Hwtx-1) family. 34 (Jztx-26) subfamily. Expressed by the venom gland.

It localises to the secreted. Functionally, spider venom neurotoxin that blocks voltage-gated sodium channels Nav1.3/SCN3A and Nav1.8/SCN10A in human (IC(50)=2 uM and IC(50)=4 uM, respectively) and rat (IC(50)=2 uM and IC(50)=2.5 uM, respectively). The sequence is that of Beta-theraphotoxin-Pmu1a from Pterinochilus murinus (Mombasa golden starburst baboon spider).